Here is a 283-residue protein sequence, read N- to C-terminus: Lolitrem B biosynthesis cluster protein S (283 aa).

The signal sequence occupies residues 1–27 (MSRSDWIFISLQGFFCLAGVIWKSREG). The next 5 helical transmembrane spans lie at 73 to 93 (WFWL…LIIL), 112 to 132 (LGYL…SLWI), 157 to 177 (IFWC…VATL), 219 to 239 (MTGT…ALEA), and 250 to 270 (VRMF…DVLL).

It belongs to the ltmS family.

The protein localises to the membrane. Part of the gene cluster that mediates the biosynthesis of lolitrems, indole-diterpene mycotoxins that are potent tremorgens in mammals, and are synthesized by clavicipitaceous fungal endophytes in association with their grass hosts. The geranylgeranyl diphosphate (GGPP) synthase ltmG is proposed to catalyze the first step in lolitrem biosynthesis. LtmG catalyzes a series of iterative condensations of isopentenyl diphosphate (IPP) with dimethylallyl diphosphate (DMAPP), geranyl diphosphate (GPP), and farnesyl diphosphate (FPP), to form GGPP. GGPP then condenses with indole-3-glycerol phosphate to form 3-geranylgeranylindole, an acyclic intermediate, to be incorporated into paxilline. Either ltmG or ltmC could be responsible for this step, as both are putative prenyl transferases. The FAD-dependent monooxygenase ltmM then catalyzes the epoxidation of the two terminal alkenes of the geranylgeranyl moiety, which is subsequently cyclized by ltmB, to paspaline. The cytochrome P450 monooxygenases ltmQ and ltmP can sequentially oxidize paspaline to terpendole E and terpendole F. Alternatively, ltmP converts paspaline to an intermediate which is oxidized by ltmQ to terpendole F. LtmF, ltmK, ltmE and ltmJ appear to be unique to the epichloe endophytes. The prenyltransferase ltmF is involved in the 27-hydroxyl-O-prenylation. The cytochrome P450 monooxygenase ltmK is required for the oxidative acetal ring formation. The multi-functional prenyltransferase ltmE is required for C20- and C21-prenylations of the indole ring of paspalanes and acts together with the cytochrome P450 monooxygenase ltmJ to yield lolitremanes by multiple oxidations and ring closures. The stereoisomer pairs of lolitriol and lolitrem N or lolitrem B and lolitrem F may be attributed to variations in the way in which ring closure can occur under the action of ltmJ. While the major product of this pathway is lolitrem B, the prenyl transferases and cytochrome P450 monooxygenases identified in this pathway have a remarkable versatility in their regio- and stereo-specificities to generate a diverse range of metabolites that are products of a metabolic grid rather than a linear pathway. This Epichloe festucae (strain Fl1) protein is Lolitrem B biosynthesis cluster protein S.